The primary structure comprises 202 residues: Segregation and condensation protein B (202 aa).

This sequence belongs to the ScpB family. As to quaternary structure, homodimer. Homodimerization may be required to stabilize the binding of ScpA to the Smc head domains. Component of a cohesin-like complex composed of ScpA, ScpB and the Smc homodimer, in which ScpA and ScpB bind to the head domain of Smc. The presence of the three proteins is required for the association of the complex with DNA.

The protein resides in the cytoplasm. Functionally, participates in chromosomal partition during cell division. May act via the formation of a condensin-like complex containing Smc and ScpA that pull DNA away from mid-cell into both cell halves. This Clostridium acetobutylicum (strain ATCC 824 / DSM 792 / JCM 1419 / IAM 19013 / LMG 5710 / NBRC 13948 / NRRL B-527 / VKM B-1787 / 2291 / W) protein is Segregation and condensation protein B.